Consider the following 200-residue polypeptide: Elongation factor Ts (200 aa).

Residues 83 to 86 (TDFA) form an involved in Mg(2+) ion dislocation from EF-Tu region.

The protein belongs to the EF-Ts family.

The protein resides in the cytoplasm. In terms of biological role, associates with the EF-Tu.GDP complex and induces the exchange of GDP to GTP. It remains bound to the aminoacyl-tRNA.EF-Tu.GTP complex up to the GTP hydrolysis stage on the ribosome. The polypeptide is Elongation factor Ts (Syntrophobacter fumaroxidans (strain DSM 10017 / MPOB)).